The sequence spans 387 residues: EARP and GARP complex-interacting protein 1 (387 aa).

M1 is modified (N-acetylmethionine). WD repeat units follow at residues 4–48 (DAPV…IIDF), 55–101 (INKN…VWRM), 124–164 (ELLC…LWDL), 172–214 (VLAS…GWDT), 219–258 (QIYC…FWDT), and 263–302 (EPVK…LSNM). A disordered region spans residues 310 to 335 (FGHLVDDDDISDQEDHRSEEKSKEPL). S320 bears the Phosphoserine mark. A compositionally biased stretch (basic and acidic residues) spans 322–335 (QEDHRSEEKSKEPL). The WD 7 repeat unit spans residues 338–379 (NVIATYEEHEDSVYAVDWSSADPWLFASLSYDGRLVINRVPR).

It belongs to the WD repeat EIPR1 family. In terms of assembly, interacts with two multisubunit tethering complexes: EARP composed of VPS50, VPS51, VPS52 and VPS53 subunits and GARP complex composed of VPS51, VPS52, VPS53 and VPS54 subunits. Interacts with SNAP29.

Its subcellular location is the golgi apparatus. The protein resides in the trans-Golgi network. Its function is as follows. Acts as a component of endosomal retrieval machinery that is involved in protein transport from early endosomes to either recycling endosomes or the trans-Golgi network. Mediates the recruitment of Golgi-associated retrograde protein (GARP) complex to the trans-Golgi network and controls early endosome-to-Golgi transport of internalized protein. Promotes the recycling of internalized transferrin receptor (TFRC) to the plasma membrane through interaction with endosome-associated recycling protein (EARP) complex. Controls proper insulin distribution and secretion, and retention of cargo in mature dense core vesicles. Required for the stability of the endosome-associated retrograde protein (EARP) complex subunits and for proper localization and association of EARP with membranes. This Homo sapiens (Human) protein is EARP and GARP complex-interacting protein 1.